The sequence spans 146 residues: Large ribosomal subunit protein uL15 (146 aa).

A compositionally biased stretch (basic and acidic residues) spans 1-18 (MKLHELKPSEGSRKERNR). A disordered region spans residues 1 to 50 (MKLHELKPSEGSRKERNRVGRGTGSGNGKTSGRGHKGQKARSGGGVRLGF). Residues 21–31 (RGTGSGNGKTS) show a composition bias toward gly residues.

Belongs to the universal ribosomal protein uL15 family. Part of the 50S ribosomal subunit.

Binds to the 23S rRNA. This chain is Large ribosomal subunit protein uL15, found in Listeria welshimeri serovar 6b (strain ATCC 35897 / DSM 20650 / CCUG 15529 / CIP 8149 / NCTC 11857 / SLCC 5334 / V8).